The following is a 236-amino-acid chain: Protein-L-isoaspartate O-methyltransferase 1 (236 aa).

Ser-85 is an active-site residue.

Belongs to the methyltransferase superfamily. L-isoaspartyl/D-aspartyl protein methyltransferase family.

The protein resides in the cytoplasm. It carries out the reaction [protein]-L-isoaspartate + S-adenosyl-L-methionine = [protein]-L-isoaspartate alpha-methyl ester + S-adenosyl-L-homocysteine. In terms of biological role, catalyzes the methyl esterification of L-isoaspartyl residues in peptides and proteins that result from spontaneous decomposition of normal L-aspartyl and L-asparaginyl residues. It plays a role in the repair and/or degradation of damaged proteins. The sequence is that of Protein-L-isoaspartate O-methyltransferase 1 from Polaromonas sp. (strain JS666 / ATCC BAA-500).